A 166-amino-acid polypeptide reads, in one-letter code: uncharacterized protein (166 aa).

Positions 1–58 are may interact with smn1; it reads MSSEITEGDLQKFHDEHFNAKAVNLWNVAFAQNDRGGNSESANVEYTQSVERYPDGTI.

In terms of assembly, part of the core SMN complex at least composed of smn1, yip11/gem2, gem6, gem7 and gem8. Interacts with smn1; the interaction is direct. Interacts with gem7; the interaction is direct.

The protein localises to the cytoplasm. It is found in the nucleus. In terms of biological role, the SMN complex catalyzes the assembly of small nuclear ribonucleoproteins (snRNPs), the building blocks of the spliceosome, and thereby plays an important role in the splicing of cellular pre-mRNAs. Most spliceosomal snRNPs contain a common set of Sm proteins SNRPB, SNRPD1, SNRPD2, SNRPD3, SNRPE, SNRPF and SNRPG that assemble in a heptameric protein ring on the Sm site of the small nuclear RNA to form the core snRNP (Sm core). In the cytosol, the Sm proteins SNRPD1, SNRPD2, SNRPE, SNRPF and SNRPG are trapped in an inactive 6S pICln-Sm complex by the chaperone CLNS1A that controls the assembly of the core snRNP. To assemble core snRNPs, the SMN complex accepts the trapped 5Sm proteins from CLNS1A forming an intermediate. Binding of snRNA inside 5Sm triggers eviction of the SMN complex, thereby allowing binding of SNRPD3 and SNRPB to complete assembly of the core snRNP. This is an uncharacterized protein from Schizosaccharomyces pombe (strain 972 / ATCC 24843) (Fission yeast).